Here is a 298-residue protein sequence, read N- to C-terminus: GTPase Era (298 aa).

Residues 3–170 (KSGFVTIVGR…VELMKKAMPE (168 aa)) enclose the Era-type G domain. A G1 region spans residues 11-18 (GRPNVGKS). 11–18 (GRPNVGKS) is a binding site for GTP. Positions 37–41 (QTTRN) are G2. Residues 58-61 (DTPG) form a G3 region. GTP contacts are provided by residues 58-62 (DTPGI) and 120-123 (NKVD). Residues 120–123 (NKVD) form a G4 region. Residues 149–151 (ISA) are G5. The KH type-2 domain maps to 201-278 (LRDEVPHGIA…NLKIWVKVRK (78 aa)).

It belongs to the TRAFAC class TrmE-Era-EngA-EngB-Septin-like GTPase superfamily. Era GTPase family. Monomer.

The protein localises to the cytoplasm. It localises to the cell membrane. In terms of biological role, an essential GTPase that binds both GDP and GTP, with rapid nucleotide exchange. Plays a role in 16S rRNA processing and 30S ribosomal subunit biogenesis and possibly also in cell cycle regulation and energy metabolism. This chain is GTPase Era, found in Clostridium beijerinckii (strain ATCC 51743 / NCIMB 8052) (Clostridium acetobutylicum).